Consider the following 732-residue polypeptide: Photosystem I P700 chlorophyll a apoprotein A1 (732 aa).

8 helical membrane-spanning segments follow: residues 61 to 84 (VFSS…FHGA), 145 to 168 (LKYA…FHMH), 185 to 209 (NAGQ…HIAL), 278 to 296 (IASH…GIIA), 317 to 340 (WHSR…HHIY), 356 to 382 (LSLF…IFMI), 414 to 436 (IIMG…IYIH), and 510 to 528 (FMVH…LILM). [4Fe-4S] cluster-binding residues include Cys552 and Cys561. A run of 2 helical transmembrane segments spans residues 568-589 (HVFL…HFFW) and 644-666 (LSGY…MFLW). Residue His655 coordinates chlorophyll a'. Met663 and Tyr671 together coordinate chlorophyll a. Trp672 lines the phylloquinone pocket. Residues 704-724 (AVGLVHYMLGGIGTTWAFFLA) form a helical membrane-spanning segment.

This sequence belongs to the PsaA/PsaB family. In terms of assembly, the PsaA/B heterodimer binds the P700 chlorophyll special pair and subsequent electron acceptors. PSI consists of a core antenna complex that captures photons, and an electron transfer chain that converts photonic excitation into a charge separation. The eukaryotic PSI reaction center is composed of at least 11 subunits. The cofactor is P700 is a chlorophyll a/chlorophyll a' dimer, A0 is one or more chlorophyll a, A1 is one or both phylloquinones and FX is a shared 4Fe-4S iron-sulfur center..

The protein localises to the plastid. Its subcellular location is the chloroplast thylakoid membrane. It carries out the reaction reduced [plastocyanin] + hnu + oxidized [2Fe-2S]-[ferredoxin] = oxidized [plastocyanin] + reduced [2Fe-2S]-[ferredoxin]. Functionally, psaA and PsaB bind P700, the primary electron donor of photosystem I (PSI), as well as the electron acceptors A0, A1 and FX. PSI is a plastocyanin/cytochrome c6-ferredoxin oxidoreductase, converting photonic excitation into a charge separation, which transfers an electron from the donor P700 chlorophyll pair to the spectroscopically characterized acceptors A0, A1, FX, FA and FB in turn. Oxidized P700 is reduced on the lumenal side of the thylakoid membrane by plastocyanin or cytochrome c6. This is Photosystem I P700 chlorophyll a apoprotein A1 from Heterocapsa triquetra (Dinoflagellate).